Consider the following 151-residue polypeptide: Neuroglobin (151 aa).

A Globin domain is found at 1–149 (MELPEPELIR…VVQAMSRGWG (149 aa)). Heme b-binding residues include His-64 and His-96.

It belongs to the globin family. As to quaternary structure, monomer. Homodimer and homotetramer; disulfide-linked. Mainly monomeric but also detected as part of homodimers and homotetramers. Interacts with 14-3-3 proteins; regulates the phosphorylation of NGB. Could interact (ferrous form) with G-alpha(i) proteins (GTP-bound form). In terms of processing, phosphorylated during hypoxia by ERK1/ERK2. Phosphorylation regulates the heme pocket hexacoordination preventing the association of His-64 with the heme metal center. Thereby, promotes the access of dioxygen and nitrite to the heme and stimulates the nitrite reductase activity. Phosphorylation during hypoxia is stabilized by 14-3-3 proteins.

It is found in the cytoplasm. The protein localises to the cytosol. The protein resides in the mitochondrion matrix. The catalysed reaction is Fe(III)-heme b-[protein] + nitric oxide + H2O = Fe(II)-heme b-[protein] + nitrite + 2 H(+). Monomeric globin with a bis-histidyl six-coordinate heme-iron atom through which it can bind dioxygen, carbon monoxide and nitric oxide. Could help transport oxygen and increase its availability to the metabolically active neuronal tissues, though its low quantity in tissues as well as its high affinity for dioxygen, which may limit its oxygen-releasing ability, argue against it. The ferrous/deoxygenated form exhibits a nitrite reductase activity and it could produce nitric oxide which in turn inhibits cellular respiration in response to hypoxia. In its ferrous/deoxygenated state, it may also exhibit GDI (Guanine nucleotide Dissociation Inhibitor) activity toward heterotrimeric G-alpha proteins, thereby regulating signal transduction to facilitate neuroprotective responses in the wake of hypoxia and associated oxidative stress. This chain is Neuroglobin, found in Bos taurus (Bovine).